We begin with the raw amino-acid sequence, 860 residues long: MSEKEGMSEVLEDTISQFRKESRSQSMKEPGFIKETSNLINEASDYLEGKSSNQIYETHPRQNTLESTSSSGRKSKRNEEQKKNLQFSETSTRTGTSQSLSSLTGRTAEYQALVNFLSHETVGEVSPQVSEENQKQLGLGADNFTVNLEAKGLQEFPKDILKIKYVKYLYLDKNQIKTFQGADSGDLLGLEILSLQENGLSSLPSEIQLLHNLRILNVSHNHISHIPKEISQLGNIRQLFFYNNYIENFPSDLECLGNLEILSLGKNKLRHIPDTLPSLKTLRVLNLEYNQLTTFPKALCFLPKLISLDLTGNLISSLPKEIRELKNLETLLMDHNKLTFLAVEIFQLLKIKELQLADNKLEVISHKIENFRELRILILDKNLLKNIPEKISCCAMLECLSLSDNKLTELPKYIHKLNNLRKLHVNRNNMVKITDCISHLNNICSLEFSGNIITDVPIEIKNCQKIIKIELSYNKIMYFPLGLCALDSLYYLSVNGNYISEIPVDISFSKQLLHLELSENKLLIFSEHFCSLINLKYLDLGKNQIKKIPASISNMISLHVLILCCNKFETFPRELCTLENLQVLDLSENQLQKISSDICNLKGIQKLNFSSNQFIHFPIELCQLQSLEQLNISQIKGRKLTRLPGELSNMTQLKELDISNNAIREIPRNIGELRNLVSLHAYNNQISYLPPSLLSLNDLQQLNLSGNNLTALPSAIYNIFSLKEINFDDNPLLRPPVEICKGKQLYTIARYLQRADERDEKILEKIFKIVANNITETNFEFLCQKLNLANSETDMPTKSTVSLSERAHQALVIWKTQSNKLSLTAAALRDQLIRALTMIGAYEIMDKITALNLFTRAIKF.

The disordered stretch occupies residues 1 to 103 (MSEKEGMSEV…TGTSQSLSSL (103 aa)). Positions 50–72 (KSSNQIYETHPRQNTLESTSSSG) are enriched in polar residues. Over residues 90–103 (TSTRTGTSQSLSSL) the composition is skewed to low complexity. LRR repeat units lie at residues 139–163 (LGADNFTVNLEAKGLQEFPKDILKI), 164–186 (KYVKYLYLDKNQIKTFQGADSGD), 187–210 (LLGLEILSLQENGLSSLPSEIQLL), 211–233 (HNLRILNVSHNHISHIPKEISQL), 235–256 (NIRQLFFYNNYIENFPSDLECL), 257–279 (GNLEILSLGKNKLRHIPDTLPSL), 281–302 (TLRVLNLEYNQLTTFPKALCFL), 303–325 (PKLISLDLTGNLISSLPKEIREL), 326–348 (KNLETLLMDHNKLTFLAVEIFQL), 350–371 (KIKELQLADNKLEVISHKIENF), 372–394 (RELRILILDKNLLKNIPEKISCC), 396–417 (MLECLSLSDNKLTELPKYIHKL), 419–440 (NLRKLHVNRNNMVKITDCISHL), 441–463 (NNICSLEFSGNIITDVPIEIKNC), 465–486 (KIIKIELSYNKIMYFPLGLCAL), 487–510 (DSLYYLSVNGNYISEIPVDISFSK), 512–532 (LLHLELSENKLLIFSEHFCSL), 533–555 (INLKYLDLGKNQIKKIPASISNM), 557–578 (SLHVLILCCNKFETFPRELCTL), 579–601 (ENLQVLDLSENQLQKISSDICNL), 603–624 (GIQKLNFSSNQFIHFPIELCQL), 627–650 (LEQLNISQIKGRKLTRLPGELSNM), 651–673 (TQLKELDISNNAIREIPRNIGEL), 675–696 (NLVSLHAYNNQISYLPPSLLSL), 697–719 (NDLQQLNLSGNNLTALPSAIYNI), and 721–742 (SLKEINFDDNPLLRPPVEICKG). The 89-residue stretch at 764 to 852 (EKIFKIVANN…EIMDKITALN (89 aa)) folds into the Death domain. An LRR 27 repeat occupies 856-860 (RAIKF).

The protein is Leucine-rich repeat and death domain-containing protein 1 (LRRD1) of Homo sapiens (Human).